The chain runs to 488 residues: Protein nucleotidyltransferase YdiU (488 aa).

The ATP site is built by G91, G93, R94, K114, D126, G127, R177, and R184. The active-site Proton acceptor is D253. Mg(2+)-binding residues include N254 and D263. D263 contributes to the ATP binding site.

Belongs to the SELO family. It depends on Mg(2+) as a cofactor. Mn(2+) serves as cofactor.

It catalyses the reaction L-seryl-[protein] + ATP = 3-O-(5'-adenylyl)-L-seryl-[protein] + diphosphate. The catalysed reaction is L-threonyl-[protein] + ATP = 3-O-(5'-adenylyl)-L-threonyl-[protein] + diphosphate. The enzyme catalyses L-tyrosyl-[protein] + ATP = O-(5'-adenylyl)-L-tyrosyl-[protein] + diphosphate. It carries out the reaction L-histidyl-[protein] + UTP = N(tele)-(5'-uridylyl)-L-histidyl-[protein] + diphosphate. It catalyses the reaction L-seryl-[protein] + UTP = O-(5'-uridylyl)-L-seryl-[protein] + diphosphate. The catalysed reaction is L-tyrosyl-[protein] + UTP = O-(5'-uridylyl)-L-tyrosyl-[protein] + diphosphate. Its function is as follows. Nucleotidyltransferase involved in the post-translational modification of proteins. It can catalyze the addition of adenosine monophosphate (AMP) or uridine monophosphate (UMP) to a protein, resulting in modifications known as AMPylation and UMPylation. This is Protein nucleotidyltransferase YdiU from Bacillus mycoides (strain KBAB4) (Bacillus weihenstephanensis).